Here is a 155-residue protein sequence, read N- to C-terminus: Nuclear cap-binding protein subunit 2 (155 aa).

Residues Tyr-19, Tyr-42, 111–115 (RTDWD), 122–126 (RQYGR), and 132–133 (QV) each bind mRNA. Positions 39–117 (ATLYVGNLSF…RIIRTDWDAG (79 aa)) constitute an RRM domain. The segment at 121–155 (GRQYGRGKSGGQVRDEYRQDYDPARGGYGKMVQKS) is disordered. A compositionally biased stretch (basic and acidic residues) spans 133 to 143 (VRDEYRQDYDP).

This sequence belongs to the RRM NCBP2 family. Component of the nuclear cap-binding complex (CBC), a heterodimer composed of ncbp1/cbp80 and ncbp2/cbp20 that interacts with m7GpppG-capped RNA.

The protein localises to the nucleus. Its subcellular location is the cytoplasm. Component of the cap-binding complex (CBC), which binds co-transcriptionally to the 5' cap of pre-mRNAs and is involved in various processes such as pre-mRNA splicing, translation regulation, nonsense-mediated mRNA decay, RNA-mediated gene silencing (RNAi) by microRNAs (miRNAs) and mRNA export. The CBC complex is involved in mRNA export from the nucleus, leading to the recruitment of the mRNA export machinery to the 5' end of mRNA and to mRNA export in a 5' to 3' direction through the nuclear pore. The CBC complex is also involved in mediating U snRNA and intronless mRNAs export from the nucleus. The CBC complex is essential for a pioneer round of mRNA translation, before steady state translation when the CBC complex is replaced by cytoplasmic cap-binding protein eIF4E. The pioneer round of mRNA translation mediated by the CBC complex plays a central role in nonsense-mediated mRNA decay (NMD), NMD only taking place in mRNAs bound to the CBC complex, but not on eIF4E-bound mRNAs. The CBC complex enhances NMD in mRNAs containing at least one exon-junction complex (EJC), promoting the interaction between upf1 and upf2. The CBC complex is also involved in 'failsafe' NMD, which is independent of the EJC complex, while it does not participate in Staufen-mediated mRNA decay (SMD). During cell proliferation, the CBC complex is also involved in microRNAs (miRNAs) biogenesis via its interaction with srrt/ars2, thereby being required for miRNA-mediated RNA interference. The CBC complex also acts as a negative regulator of parn, thereby acting as an inhibitor of mRNA deadenylation. In the CBC complex, ncbp2/cbp20 recognizes and binds capped RNAs (m7GpppG-capped RNA) but requires ncbp1/cbp80 to stabilize the movement of its N-terminal loop and lock the CBC into a high affinity cap-binding state with the cap structure. The conventional cap-binding complex with NCBP2 binds both small nuclear RNA (snRNA) and messenger (mRNA) and is involved in their export from the nucleus. This Danio rerio (Zebrafish) protein is Nuclear cap-binding protein subunit 2 (ncbp2).